A 351-amino-acid chain; its full sequence is sn-1 oleoyl-lipid 12-desaturase (351 aa).

The interval 1–20 is disordered; the sequence is MTLSIVKSEDSSSRPSAVPS. 2 helical membrane passes run 44-62 and 68-88; these read AWMT…WLGI and FLLP…FVIG. The Histidine box-1 signature appears at 89–93; it reads HDCGH. A helical membrane pass occupies residues 100 to 120; the sequence is VWVNDWVGHILFLPIIYPFHS. Positions 125-129 match the Histidine box-2 motif; sequence HNQHH. Transmembrane regions (helical) follow at residues 199 to 219 and 221 to 241; these read LLVI…IGVW and FVKF…TFTL. Residues 289-293 carry the Histidine box-3 motif; the sequence is HHVTT.

Belongs to the fatty acid desaturase type 2 family. Fe(2+) is required as a cofactor.

It is found in the cellular thylakoid membrane. The catalysed reaction is a 1-[(9Z)-octadecenoyl]-2-acyl-glycerolipid + 2 reduced [2Fe-2S]-[ferredoxin] + O2 + 2 H(+) = a 1-[(9Z,12Z)-octadecdienoyl]-2-acyl-glycerolipid + 2 oxidized [2Fe-2S]-[ferredoxin] + 2 H2O. It participates in lipid metabolism; polyunsaturated fatty acid biosynthesis. In terms of biological role, desaturase involved in fatty acid biosynthesis. Introduces a double bond at carbon 12 of oleoyl groups (18:1) attached to the sn-1 position of the glycerol moiety of membrane glycerolipids. This chain is sn-1 oleoyl-lipid 12-desaturase, found in Arthrospira platensis (Spirulina platensis).